The chain runs to 215 residues: Short neuropeptide F (215 aa).

The signal sequence occupies residues 1–22 (MCRINFTTLSLILVLWSGSLMS). A propeptide spanning residues 23–56 (EPSQNADGSIKGLYEYLLQREYAAPVSYADHQIK) is cleaved from the precursor. A phenylalanine amide mark is found at F69 and F101. At W129 the chain carries Tryptophan amide. A Phenylalanine amide modification is found at F157. The propeptide occupies 160-215 (SDPSWAMFNEHQLDEQQFADATRQPSKTLRGDEPTSIESTEQVESEENSPSNMDEK). Positions 173–215 (DEQQFADATRQPSKTLRGDEPTSIESTEQVESEENSPSNMDEK) are disordered.

The protein belongs to the NPY family.

It is found in the secreted. In terms of biological role, plays a role in controlling food intake and regulating body size. The chain is Short neuropeptide F from Aedes aegypti (Yellowfever mosquito).